The primary structure comprises 232 residues: Large ribosomal subunit protein uL1 (232 aa).

The protein belongs to the universal ribosomal protein uL1 family. In terms of assembly, part of the 50S ribosomal subunit.

Binds directly to 23S rRNA. The L1 stalk is quite mobile in the ribosome, and is involved in E site tRNA release. Functionally, protein L1 is also a translational repressor protein, it controls the translation of the L11 operon by binding to its mRNA. This Chlamydia caviae (strain ATCC VR-813 / DSM 19441 / 03DC25 / GPIC) (Chlamydophila caviae) protein is Large ribosomal subunit protein uL1.